The sequence spans 240 residues: 4-hydroxy-tetrahydrodipicolinate reductase (240 aa).

Residues 79-81 and 103-106 contribute to the NAD(+) site; these read ATT and SANM. H135 serves as the catalytic Proton donor/acceptor. H136 provides a ligand contact to (S)-2,3,4,5-tetrahydrodipicolinate. K139 (proton donor) is an active-site residue. 145–146 is a binding site for (S)-2,3,4,5-tetrahydrodipicolinate; it reads GT.

The protein belongs to the DapB family.

It is found in the cytoplasm. The catalysed reaction is (S)-2,3,4,5-tetrahydrodipicolinate + NAD(+) + H2O = (2S,4S)-4-hydroxy-2,3,4,5-tetrahydrodipicolinate + NADH + H(+). It carries out the reaction (S)-2,3,4,5-tetrahydrodipicolinate + NADP(+) + H2O = (2S,4S)-4-hydroxy-2,3,4,5-tetrahydrodipicolinate + NADPH + H(+). The protein operates within amino-acid biosynthesis; L-lysine biosynthesis via DAP pathway; (S)-tetrahydrodipicolinate from L-aspartate: step 4/4. Functionally, catalyzes the conversion of 4-hydroxy-tetrahydrodipicolinate (HTPA) to tetrahydrodipicolinate. The sequence is that of 4-hydroxy-tetrahydrodipicolinate reductase from Staphylococcus aureus (strain MSSA476).